Reading from the N-terminus, the 596-residue chain is uncharacterized protein (596 aa).

Residues K44–D203 enclose the Helicase ATP-binding domain. A Helicase C-terminal domain is found at R285–L432. Disordered regions lie at residues L420–Q444 and E506–G533. Residues K510–R523 are compositionally biased toward polar residues.

The protein to M.tuberculosis Rv2917.

This is an uncharacterized protein from Mycobacterium leprae (strain TN).